The following is a 1065-amino-acid chain: WD repeat-containing protein on Y chromosome (1065 aa).

WD repeat units follow at residues 153-197 (EEVT…IRTA), 326-365 (RVPL…EPSA), 369-408 (GHNG…LLQT), 459-498 (THAA…RKII), 511-550 (IIDI…VVRN), 598-638 (FHTD…RRYS), 745-784 (KTGD…VPEA), and 828-867 (AHLK…LGTL). Residues 915-925 (PAKRAEVKAPE) are compositionally biased toward basic and acidic residues. Disordered regions lie at residues 915–936 (PAKR…QTDD) and 1024–1065 (GSAL…QQSE). Residues 926–936 (DRDEETAQTDD) show a composition bias toward acidic residues.

In Drosophila persimilis (Fruit fly), this protein is WD repeat-containing protein on Y chromosome.